Here is a 1041-residue protein sequence, read N- to C-terminus: Collagen alpha-2(I) chain (1041 aa).

A disordered region spans residues 1-1041 (SGGFDFSFLP…FGYEGDFYRA (1041 aa)). A 4-hydroxyproline mark is found at Pro-10, Pro-13, Pro-39, and Pro-45. Composition is skewed to low complexity over residues 25–45 (LGPG…SGAP) and 55–76 (EPGE…PPGK). Residues 77–91 (AGEDGHPGKPGRPGE) show a composition bias toward basic and acidic residues. A 5-hydroxylysine; alternate modification is found at Lys-113. Lys-113 carries O-linked (Gal...) hydroxylysine; alternate glycosylation. Low complexity-rich tracts occupy residues 174 to 189 (SVGP…SAGP) and 235 to 256 (PGAN…AGAP). Over residues 290-299 (GESGGKGEPG) the composition is skewed to gly residues. A compositionally biased stretch (low complexity) spans 300 to 310 (SAGPQGPPGSS). The segment covering 332 to 341 (GLRGGPGSRG) has biased composition (gly residues). A compositionally biased stretch (low complexity) spans 354-370 (PAGARGASGPAGVRGPS). Residues Pro-376 and Pro-379 each carry the 4-hydroxyproline modification. Low complexity predominate over residues 405-424 (LPGIDGRPGPIGPAGARGEA). Positions 466-475 (GVQGGKGEQG) are enriched in gly residues. Composition is skewed to low complexity over residues 522–539 (SGES…SRGP) and 551–561 (EPGVVGAPGTA). A compositionally biased stretch (gly residues) spans 562 to 571 (GPAGSGGLPG). 2 stretches are compositionally biased toward low complexity: residues 594 to 638 (VGTT…PRGS) and 645 to 665 (VGPA…QPGA). The segment covering 666 to 675 (KGERGTKGPK) has biased composition (basic and acidic residues). Residues 683 to 693 (PTGPVGSAGPA) are compositionally biased toward low complexity. The segment covering 703-712 (GSRGDGGPPG) has biased composition (gly residues). Positions 714 to 723 (TGFPGAAGRT) are enriched in low complexity. Gly residues predominate over residues 754 to 768 (GPVGRGETGAGGPPG). Low complexity-rich tracts occupy residues 769-803 (FTGE…LGLP) and 811-821 (LPGVAGAVGEP). The segment covering 822 to 840 (GPLGIGPPGARGPSGGVPG) has biased composition (gly residues). Composition is skewed to low complexity over residues 874–887 (YAGN…AGAP) and 903–918 (EPGP…ALGP). Residues 928–939 (RGDKGEAGDKGP) are compositionally biased toward basic and acidic residues. A compositionally biased stretch (pro residues) spans 1013 to 1023 (PAGPPGPPGPP).

Belongs to the fibrillar collagen family. Trimers of one alpha 2(I) and two alpha 1(I) chains. Interacts (via C-terminus) with TMEM131 (via PapD-L domain); the interaction is direct and is involved in assembly and TRAPPIII ER-to-Golgi transport complex-dependent secretion of collagen. In terms of processing, prolines at the third position of the tripeptide repeating unit (G-X-Y) are hydroxylated in some or all of the chains. Expressed in bones.

Its subcellular location is the secreted. It is found in the extracellular space. The protein localises to the extracellular matrix. Type I collagen is a member of group I collagen (fibrillar forming collagen). The chain is Collagen alpha-2(I) chain from Paramylodon harlani (Harlan's ground sloth).